The primary structure comprises 856 residues: Translation initiation factor IF-2 (856 aa).

Residues 356–526 (PRAPVVTVMG…LLIADLLELK (171 aa)) enclose the tr-type G domain. The G1 stretch occupies residues 365-372 (GHVDHGKT). 365 to 372 (GHVDHGKT) contacts GTP. The tract at residues 390–394 (GITQH) is G2. Residues 412–415 (DTPG) form a G3 region. Residues 412–416 (DTPGH) and 466–469 (NKID) contribute to the GTP site. The G4 stretch occupies residues 466-469 (NKID). The segment at 502 to 504 (SAK) is G5.

Belongs to the TRAFAC class translation factor GTPase superfamily. Classic translation factor GTPase family. IF-2 subfamily.

The protein localises to the cytoplasm. In terms of biological role, one of the essential components for the initiation of protein synthesis. Protects formylmethionyl-tRNA from spontaneous hydrolysis and promotes its binding to the 30S ribosomal subunits. Also involved in the hydrolysis of GTP during the formation of the 70S ribosomal complex. In Ehrlichia ruminantium (strain Gardel), this protein is Translation initiation factor IF-2.